A 451-amino-acid chain; its full sequence is MGKYFGTDGVRGEANVELTPELAFKLGRFGGYVLSQHETERPKVFVARDTRISGEMLESALIAGLLSVGIEVYKLGVLATPGVSYLVRTEKASAGVMISASHNPALDNGIKFFGNDGFKLADDQELEIEALLDAPEDTLPRPSAEGLGTLVDYPEGLRKYEKFLVTTGTDLSGMTVALDTANGAASVSARDVFLDLNAEIAVIGEKPNGLNINDGVGSTHPEQLQELVKETGADLGLAFDGDSDRLIAVDETGEIVDGDRIMFIIGKYLSEKGLLAHNTIVTTVMSNLGFHKALDKQGINKAIAAVGDRYVVEEMRSSGYNLGGEQSGHVIIMDYNTTGDGQLTAIQLAKVMKETGKSLSELAAEVTIYPQKLVNIRVENSMKDRAMEVPAIANIIAKMEDEMAGNGRILVRPSGTEPLLRVMAEAPTDAKVDYYVDTIADVVRTEIGCDN.

The active-site Phosphoserine intermediate is S101. Mg(2+) is bound by residues S101, D240, D242, and D244. The residue at position 101 (S101) is a Phosphoserine.

The protein belongs to the phosphohexose mutase family. Mg(2+) serves as cofactor. Post-translationally, activated by phosphorylation.

It carries out the reaction alpha-D-glucosamine 1-phosphate = D-glucosamine 6-phosphate. Catalyzes the conversion of glucosamine-6-phosphate to glucosamine-1-phosphate. This chain is Phosphoglucosamine mutase, found in Streptococcus pyogenes serotype M18 (strain MGAS8232).